Here is a 242-residue protein sequence, read N- to C-terminus: Type III pantothenate kinase (242 aa).

7–14 serves as a coordination point for ATP; the sequence is DLGNSRFK. Substrate contacts are provided by residues Y91 and 98-101; that span reads GVDR. The active-site Proton acceptor is the D100. T121 lines the ATP pocket. T171 is a binding site for substrate.

This sequence belongs to the type III pantothenate kinase family. Homodimer. Requires NH4(+) as cofactor. K(+) is required as a cofactor.

It localises to the cytoplasm. It carries out the reaction (R)-pantothenate + ATP = (R)-4'-phosphopantothenate + ADP + H(+). The protein operates within cofactor biosynthesis; coenzyme A biosynthesis; CoA from (R)-pantothenate: step 1/5. In terms of biological role, catalyzes the phosphorylation of pantothenate (Pan), the first step in CoA biosynthesis. This is Type III pantothenate kinase from Xanthomonas campestris pv. campestris (strain 8004).